Here is a 571-residue protein sequence, read N- to C-terminus: MTDEKVNSDQNMNGKQGVNLISSLPTTQVPVSILTNKERRKSIHDESNFERSDSHEDQSKSNSNRRNIYKNDYSTNLRDFSFANLKQNSERNKDGHEIQINTSMPANTNGQQKRFSPSLPSAVSFTVPEVERLPYHRYSISNKPGKQQQQQEQLQQNQQQEEQQKAQLQEQNQRAKQQEEVKQIQEQVQKKQTERQQLIDEKERIANAIFKENTTNDGTDIRKHSVSSGTSNSEDEVDSPSMEKNSIVHMPGDFIYFNPKSNASKPITAKAAPLSANNSTHKNKEVITAPTGPRVPFTEFFQKEDDKKFHILIGATGSVATIKVPLIIDKLFKIYGPEKISIQLIVTKPAEHFLKGLKMSTHVKIWREEDAWVFDAVNKNDTSLSLNLILHHELRKWADIFLIAPLSANTLAKLANGICNNLLTSVMRDWSPLTPVLIAPAMNTFMYINPMTKKHLTSLVQDYPFIQVLKPVEKVLICGDIGMGGMREWTDIVEIVRRRINEIRKARDEETGDKEQEQEEQEGADNEDDDDEDDEEDEEDEEEEEALNETASDESNDEEDEEDEEDVKTEV.

Disordered stretches follow at residues Met1–Asp72 and Ile100–Pro120. Residues Ser8–Thr35 are compositionally biased toward polar residues. The residue at position 42 (Ser42) is a Phosphoserine. Positions Ile43–Ser59 are enriched in basic and acidic residues. The span at Lys60–Asp72 shows a compositional bias: polar residues. Ser116, Ser121, and Ser124 each carry phosphoserine. 2 disordered regions span residues Ile140–Gln171 and Ile209–Lys244. The segment covering Lys146–Gln171 has biased composition (low complexity). A Phosphoserine modification is found at Ser264. Residues Arg507–Val571 form a disordered region. Over residues Gln516–Val571 the composition is skewed to acidic residues.

This sequence belongs to the HFCD (homooligomeric flavin containing Cys decarboxylase) superfamily. In terms of assembly, component of the phosphopantothenoylcysteine decarboxylase (PPCDC) complex, a heterotrimer composed of CAB3, HAL3 and VHS3.

The protein localises to the cytoplasm. In terms of biological role, component of the phosphopantothenoylcysteine decarboxylase (PPCDC) involved in the coenzyme A synthesis. This Saccharomyces cerevisiae (strain ATCC 204508 / S288c) (Baker's yeast) protein is Coenzyme A biosynthesis protein 3 (CAB3).